The chain runs to 535 residues: Peptide chain release factor 3 (535 aa).

Residues 8–276 enclose the tr-type G domain; it reads ARRRTFAIIS…ALVEQAPPPG (269 aa). GTP-binding positions include 17-24, 85-89, and 139-142; these read SHPDAGKT, DTPGH, and NKMD.

This sequence belongs to the TRAFAC class translation factor GTPase superfamily. Classic translation factor GTPase family. PrfC subfamily.

The protein resides in the cytoplasm. Increases the formation of ribosomal termination complexes and stimulates activities of RF-1 and RF-2. It binds guanine nucleotides and has strong preference for UGA stop codons. It may interact directly with the ribosome. The stimulation of RF-1 and RF-2 is significantly reduced by GTP and GDP, but not by GMP. The polypeptide is Peptide chain release factor 3 (Bordetella petrii (strain ATCC BAA-461 / DSM 12804 / CCUG 43448)).